Reading from the N-terminus, the 642-residue chain is MPVITLPDGSKREFAHAVSTLDVAADIGPGLAKACIAGRVNGELKDACDLIETDAELSIITAKDEEGVEILRHSCAHLLGHAIKQMWPETKMAIGPVIDNGFYYDIDLEHKLTQDDIDALEKRMLQLAKTNYDVVKRVVSWQEARDTFAARGEDYKIAILDENISKDATPALYHHEEYTDMCRGPHVPNMRFCQHFKLMSIAGAYWRGNSENKMLQRIYGTAWADKKALSTHLTRLEEAAKRDHRKIGKQLDLYHMQEEAPGMVFWHNDGWSIFLELERFIRRKLNQYTYQEVKGPLMMDRVLWERSGHWDKYSEAMFTTSSENREYAIKPMNCPGHVQIFNQGLKSYRDLPLRMAEFGCCHRNEPSGSLHGLMRVRGFTQDDAHIFCTDSQVQEEVSACIQMVYDTYATFGFENIVVKLSTRPEKRIGDDAMWDRAEEALKQALRDNNIEFTILPGEGAFYGPKIEFTLHDCLDRAWQCGTVQLDYALPSRLGATYVAEDNSRQTPVMIHRAILGSLERFLGILIEEYAGRFPTWLAPMQVVVMNITDKQADYVEEVVKFFKEQGIRASFDLRNEKIGFKIREHTLRRVPYLLVVGDQEMENKEVAVRTRDGIDLGKMRLEDFATKIHQQISLRSLKLLEE.

In terms of domain architecture, TGS spans 1–61 (MPVITLPDGS…ETDAELSIIT (61 aa)). Residues 243 to 534 (DHRKIGKQLD…LIEEYAGRFP (292 aa)) are catalytic. Residues Cys334, His385, and His511 each contribute to the Zn(2+) site.

It belongs to the class-II aminoacyl-tRNA synthetase family. As to quaternary structure, homodimer. Requires Zn(2+) as cofactor.

Its subcellular location is the cytoplasm. The catalysed reaction is tRNA(Thr) + L-threonine + ATP = L-threonyl-tRNA(Thr) + AMP + diphosphate + H(+). Functionally, catalyzes the attachment of threonine to tRNA(Thr) in a two-step reaction: L-threonine is first activated by ATP to form Thr-AMP and then transferred to the acceptor end of tRNA(Thr). Also edits incorrectly charged L-seryl-tRNA(Thr). This chain is Threonine--tRNA ligase, found in Shewanella baltica (strain OS155 / ATCC BAA-1091).